The sequence spans 219 residues: 7-cyano-7-deazaguanine synthase (219 aa).

10-20 (FSGGQDSTTCL) is an ATP binding site. The Zn(2+) site is built by Cys-188, Cys-196, Cys-199, and Cys-202.

Belongs to the QueC family. Requires Zn(2+) as cofactor.

The enzyme catalyses 7-carboxy-7-deazaguanine + NH4(+) + ATP = 7-cyano-7-deazaguanine + ADP + phosphate + H2O + H(+). The protein operates within purine metabolism; 7-cyano-7-deazaguanine biosynthesis. In terms of biological role, catalyzes the ATP-dependent conversion of 7-carboxy-7-deazaguanine (CDG) to 7-cyano-7-deazaguanine (preQ(0)). The sequence is that of 7-cyano-7-deazaguanine synthase from Neisseria meningitidis serogroup C / serotype 2a (strain ATCC 700532 / DSM 15464 / FAM18).